Here is a 63-residue protein sequence, read N- to C-terminus: Large ribosomal subunit protein bL28 (63 aa).

Belongs to the bacterial ribosomal protein bL28 family.

In Syntrophotalea carbinolica (strain DSM 2380 / NBRC 103641 / GraBd1) (Pelobacter carbinolicus), this protein is Large ribosomal subunit protein bL28.